Consider the following 368-residue polypeptide: tRNA-specific 2-thiouridylase MnmA (368 aa).

ATP-binding positions include 11–18 (GMSGGVDS) and Met37. The tract at residues 97 to 99 (NPD) is interaction with target base in tRNA. The Nucleophile role is filled by Cys102. The cysteines at positions 102 and 199 are disulfide-linked. Position 127 (Gly127) interacts with ATP. Positions 149–151 (KDQ) are interaction with tRNA. Cys199 serves as the catalytic Cysteine persulfide intermediate. The segment at 311-312 (RY) is interaction with tRNA.

The protein belongs to the MnmA/TRMU family. As to quaternary structure, interacts with TusE.

It is found in the cytoplasm. The enzyme catalyses S-sulfanyl-L-cysteinyl-[protein] + uridine(34) in tRNA + AH2 + ATP = 2-thiouridine(34) in tRNA + L-cysteinyl-[protein] + A + AMP + diphosphate + H(+). Catalyzes the 2-thiolation of uridine at the wobble position (U34) of tRNA(Lys), tRNA(Glu) and tRNA(Gln), leading to the formation of s(2)U34, the first step of tRNA-mnm(5)s(2)U34 synthesis. Sulfur is provided by IscS, via a sulfur-relay system. Binds ATP and its substrate tRNAs. The sequence is that of tRNA-specific 2-thiouridylase MnmA from Shigella flexneri serotype 5b (strain 8401).